We begin with the raw amino-acid sequence, 127 residues long: Small ribosomal subunit protein uS13 (127 aa).

Residues 97 to 127 are disordered; it reads PVRGQRTRTNARTRRGRRVTVAGKKKAPSKK. A compositionally biased stretch (basic residues) spans 101 to 127; sequence QRTRTNARTRRGRRVTVAGKKKAPSKK.

This sequence belongs to the universal ribosomal protein uS13 family. Part of the 30S ribosomal subunit. Forms a loose heterodimer with protein S19. Forms two bridges to the 50S subunit in the 70S ribosome.

Functionally, located at the top of the head of the 30S subunit, it contacts several helices of the 16S rRNA. In the 70S ribosome it contacts the 23S rRNA (bridge B1a) and protein L5 of the 50S subunit (bridge B1b), connecting the 2 subunits; these bridges are implicated in subunit movement. Contacts the tRNAs in the A and P-sites. This is Small ribosomal subunit protein uS13 from Microcystis aeruginosa (strain NIES-843 / IAM M-2473).